The sequence spans 576 residues: ATP-dependent RNA helicase has1 (576 aa).

The disordered stretch occupies residues 1 to 94 (MGSAQDQTKK…STMGLSLPTD (94 aa)). The segment covering 26 to 37 (RVVEADDQRELT) has biased composition (basic and acidic residues). Acidic residues predominate over residues 51-66 (PPTDETPDAEDVEQTE). The short motif at 98–126 (QKFDELNLSEPTMKAIRQMGFETMTEIQQ) is the Q motif element. Residues 129-305 (IPPTLAGRDI…RISLKPGPLY (177 aa)) enclose the Helicase ATP-binding domain. An ATP-binding site is contributed by 142-149 (AKTGSGKT). Residues 252 to 255 (DEAD) carry the DEAD box motif. The Helicase C-terminal domain occupies 319–490 (GVDQGYIICE…DIQSQLEKLI (172 aa)). A disordered region spans residues 555 to 576 (DKVQARRPYGSQNKSARFKRRA).

The protein belongs to the DEAD box helicase family. DDX18/HAS1 subfamily. Associates in the nucleolus with the 60S and pre-60S ribosomal subunits.

The protein localises to the nucleus. It is found in the nucleolus. The enzyme catalyses ATP + H2O = ADP + phosphate + H(+). Functionally, ATP-dependent RNA helicase involved in 40S ribosomal subunit biogenesis. Required for the processing and cleavage of 35S pre-rRNA at sites A0, A1, and A2, leading to mature 18S rRNA. This is ATP-dependent RNA helicase has1 (has1) from Aspergillus terreus (strain NIH 2624 / FGSC A1156).